The sequence spans 231 residues: Adenosylcobinamide-GDP ribazoletransferase (231 aa).

Transmembrane regions (helical) follow at residues 24–44 (LWAFPLVALVSSALPTLILYL), 46–66 (LPLSNLLAVLALYWTIGLLHL), 96–116 (IAGLFAVVIVLLLQVYSLQLL), 159–176 (LALGTLLYVLLGLSVVLF), 181–198 (LAGILGLLFGVHIIRISL), and 209–229 (LGATAEITRAGTLVVMALVWW).

This sequence belongs to the CobS family. It depends on Mg(2+) as a cofactor.

It is found in the cell membrane. The enzyme catalyses alpha-ribazole + adenosylcob(III)inamide-GDP = adenosylcob(III)alamin + GMP + H(+). The catalysed reaction is alpha-ribazole 5'-phosphate + adenosylcob(III)inamide-GDP = adenosylcob(III)alamin 5'-phosphate + GMP + H(+). Its pathway is cofactor biosynthesis; adenosylcobalamin biosynthesis; adenosylcobalamin from cob(II)yrinate a,c-diamide: step 7/7. Functionally, joins adenosylcobinamide-GDP and alpha-ribazole to generate adenosylcobalamin (Ado-cobalamin). Also synthesizes adenosylcobalamin 5'-phosphate from adenosylcobinamide-GDP and alpha-ribazole 5'-phosphate. This Thermococcus kodakarensis (strain ATCC BAA-918 / JCM 12380 / KOD1) (Pyrococcus kodakaraensis (strain KOD1)) protein is Adenosylcobinamide-GDP ribazoletransferase.